A 284-amino-acid polypeptide reads, in one-letter code: tRNA uridine(34) hydroxylase (284 aa).

The Rhodanese domain maps to 132-226; that stretch reads DGRPVVMLDT…YFEEVGGAHY (95 aa). Cys-186 functions as the Cysteine persulfide intermediate in the catalytic mechanism.

This sequence belongs to the TrhO family.

It carries out the reaction uridine(34) in tRNA + AH2 + O2 = 5-hydroxyuridine(34) in tRNA + A + H2O. Its function is as follows. Catalyzes oxygen-dependent 5-hydroxyuridine (ho5U) modification at position 34 in tRNAs. This Burkholderia vietnamiensis (strain G4 / LMG 22486) (Burkholderia cepacia (strain R1808)) protein is tRNA uridine(34) hydroxylase.